The sequence spans 196 residues: Probable calcium-binding protein CML32 (196 aa).

3 consecutive EF-hand domains span residues 30 to 65 (LNAV…LGLV), 121 to 156 (DEEE…LGLP), and 159 to 194 (GSLA…ITVW). Ca(2+) contacts are provided by Asp43, Asn45, Asp47, Glu49, Glu54, Asp134, Asp136, Asp138, Glu145, Asp172, Asn174, Asp176, Arg178, and Glu183.

Functionally, potential calcium sensor. The chain is Probable calcium-binding protein CML32 (CML32) from Oryza sativa subsp. japonica (Rice).